The following is a 430-amino-acid chain: Glutamate-1-semialdehyde 2,1-aminomutase (430 aa).

Position 267 is an N6-(pyridoxal phosphate)lysine (K267).

It belongs to the class-III pyridoxal-phosphate-dependent aminotransferase family. HemL subfamily. As to quaternary structure, homodimer. Pyridoxal 5'-phosphate is required as a cofactor.

It is found in the cytoplasm. It carries out the reaction (S)-4-amino-5-oxopentanoate = 5-aminolevulinate. It functions in the pathway porphyrin-containing compound metabolism; protoporphyrin-IX biosynthesis; 5-aminolevulinate from L-glutamyl-tRNA(Glu): step 2/2. In Anaeromyxobacter dehalogenans (strain 2CP-C), this protein is Glutamate-1-semialdehyde 2,1-aminomutase.